The sequence spans 153 residues: UPF0127 protein TGAM_1372 (153 aa).

Belongs to the UPF0127 family.

In Thermococcus gammatolerans (strain DSM 15229 / JCM 11827 / EJ3), this protein is UPF0127 protein TGAM_1372.